Here is a 615-residue protein sequence, read N- to C-terminus: MFCRLGVHQFSPLSLILNTTKLARASTLSSACYPIQCTMVNSTNITNNTTIFDNHIHRRSANYEPPIWSFDYIQSLSSSQYKGETCTSRLNELEANVKEILLVEMKSNSLAQLEFIDALQGRLLSYRFETEINTILNEKYSINIFDNPNYNLYATALEFRLLRHHGYDVSQEIFNVFKDEITSKFKARTSGEDIIGVLALYEASFYGKKSESILEEARVSSIECLENYVAMETMTRNKPSLLVNDYDDDNNMLLLVNHALELPLYWRITRSEARWFIDLYEKNHNMNSTLLEFAKLDYNMVQSIYQEDLKHLSRWWSHTKLGEKMDFFRDRLMECFLWTVGIACEPEKSYYRRMSGRLYVLITTIDDIYDVYGTLEELELFTNAVERWDVKAMDDLPEYMRMPFFLLHNTINEMAFDVLGHQNFLNVKFLKRTWVDFCKHQLQEAKWFHSGYKPTFEEYINNAWISVSGPIILMDAYFSLTNPVTKDAINLLELGYPPIIYHASMILRLTDDLGTSNDEMKRGDIPKSIQCYMNDTGVSEDEARDHMKFLISELWKEINNEDENMDSPFSKQFLQNCKNLARISQFIYQYGDGHASQDSLSKQRISELPSIINHI.

Residues 1–33 (MFCRLGVHQFSPLSLILNTTKLARASTLSSACY) constitute a chloroplast transit peptide. 5 residues coordinate (2E)-geranyl diphosphate: Glu334, Val371, Leu375, Leu513, and Ser516. Mg(2+)-binding residues include Val371 and Leu375. A DDXXD motif motif is present at residues 371-375 (VYGTL). 3 residues coordinate Mg(2+): Ser516, Met520, and Asp524.

It belongs to the terpene synthase family. Tpsb subfamily. Mg(2+) is required as a cofactor. Mn(2+) serves as cofactor.

The protein localises to the plastid. Its subcellular location is the chloroplast. The catalysed reaction is (2E)-geranyl diphosphate = alpha-terpinene + diphosphate. It carries out the reaction (2E)-geranyl diphosphate = gamma-terpinene + diphosphate. It functions in the pathway secondary metabolite biosynthesis; terpenoid biosynthesis. Functionally, involved in monoterpene (C10) olefins biosynthesis, constituants of cannabinoids and terpenoids-rich resins. Catalyzes mainly the conversion of (2E)-geranyl diphosphate to alpha-terpinene and gamma-terpinene. The chain is Alpha-terpinene synthase TPS33PK, chloroplastic from Cannabis sativa (Hemp).